A 160-amino-acid chain; its full sequence is Cyclic pyranopterin monophosphate synthase (160 aa).

Substrate is bound by residues 77 to 79 and 114 to 115; these read MCH and ME. Asp129 is a catalytic residue.

The protein belongs to the MoaC family. Homohexamer; trimer of dimers.

It catalyses the reaction (8S)-3',8-cyclo-7,8-dihydroguanosine 5'-triphosphate = cyclic pyranopterin phosphate + diphosphate. Its pathway is cofactor biosynthesis; molybdopterin biosynthesis. In terms of biological role, catalyzes the conversion of (8S)-3',8-cyclo-7,8-dihydroguanosine 5'-triphosphate to cyclic pyranopterin monophosphate (cPMP). In Listeria monocytogenes serotype 4b (strain F2365), this protein is Cyclic pyranopterin monophosphate synthase.